The chain runs to 324 residues: tRNA U34 carboxymethyltransferase (324 aa).

Carboxy-S-adenosyl-L-methionine is bound by residues Lys92, Trp106, Lys111, Gly131, 181–182, Met197, Tyr201, and Arg316; that span reads LE.

This sequence belongs to the class I-like SAM-binding methyltransferase superfamily. CmoB family. As to quaternary structure, homotetramer.

The enzyme catalyses carboxy-S-adenosyl-L-methionine + 5-hydroxyuridine(34) in tRNA = 5-carboxymethoxyuridine(34) in tRNA + S-adenosyl-L-homocysteine + H(+). Functionally, catalyzes carboxymethyl transfer from carboxy-S-adenosyl-L-methionine (Cx-SAM) to 5-hydroxyuridine (ho5U) to form 5-carboxymethoxyuridine (cmo5U) at position 34 in tRNAs. The protein is tRNA U34 carboxymethyltransferase of Syntrophotalea carbinolica (strain DSM 2380 / NBRC 103641 / GraBd1) (Pelobacter carbinolicus).